The sequence spans 258 residues: Aspartate/glutamate leucyltransferase (258 aa).

This sequence belongs to the R-transferase family. Bpt subfamily.

The protein resides in the cytoplasm. It carries out the reaction N-terminal L-glutamyl-[protein] + L-leucyl-tRNA(Leu) = N-terminal L-leucyl-L-glutamyl-[protein] + tRNA(Leu) + H(+). The enzyme catalyses N-terminal L-aspartyl-[protein] + L-leucyl-tRNA(Leu) = N-terminal L-leucyl-L-aspartyl-[protein] + tRNA(Leu) + H(+). Functionally, functions in the N-end rule pathway of protein degradation where it conjugates Leu from its aminoacyl-tRNA to the N-termini of proteins containing an N-terminal aspartate or glutamate. This Rhodopseudomonas palustris (strain BisB18) protein is Aspartate/glutamate leucyltransferase.